The chain runs to 151 residues: UPF0756 membrane protein LBA0919 (151 aa).

The next 4 helical transmembrane spans lie at Trp4–Ile24, Trp52–Phe72, Thr78–Ser98, and Leu115–Ile135.

This sequence belongs to the UPF0756 family.

The protein resides in the cell membrane. In Lactobacillus acidophilus (strain ATCC 700396 / NCK56 / N2 / NCFM), this protein is UPF0756 membrane protein LBA0919.